The primary structure comprises 109 residues: Spermidine export protein MdtI (109 aa).

4 consecutive transmembrane segments (helical) span residues 6-26, 36-56, 64-84, and 88-108; these read WIHG…NVLL, CYGI…SQAV, AYAL…WVLF, and LNPK…MIKF.

This sequence belongs to the drug/metabolite transporter (DMT) superfamily. Small multidrug resistance (SMR) (TC 2.A.7.1) family. MdtI subfamily. As to quaternary structure, forms a complex with MdtJ.

The protein localises to the cell inner membrane. Functionally, catalyzes the excretion of spermidine. This chain is Spermidine export protein MdtI, found in Salmonella choleraesuis (strain SC-B67).